Consider the following 604-residue polypeptide: UvrABC system protein C (604 aa).

Positions 13–92 (ASPGVYLMKD…IKKYHPKYNV (80 aa)) constitute a GIY-YIG domain. The 36-residue stretch at 205–240 (SEIVQDLEKSIEKASKEQKFEQAGMYYRTLKLIQQA) folds into the UVR domain.

This sequence belongs to the UvrC family. As to quaternary structure, interacts with UvrB in an incision complex.

It is found in the cytoplasm. The UvrABC repair system catalyzes the recognition and processing of DNA lesions. UvrC both incises the 5' and 3' sides of the lesion. The N-terminal half is responsible for the 3' incision and the C-terminal half is responsible for the 5' incision. The polypeptide is UvrABC system protein C (Chlamydia abortus (strain DSM 27085 / S26/3) (Chlamydophila abortus)).